The sequence spans 296 residues: Putative F-box protein At1g67623 (296 aa).

Residues 21 to 70 form the F-box domain; that stretch reads SLCLDSLPEDLLVEISSCTGASSLSAVRNLRLVSKSFRRICDEKYVFYRL.

This Arabidopsis thaliana (Mouse-ear cress) protein is Putative F-box protein At1g67623.